The following is a 201-amino-acid chain: 3-isopropylmalate dehydratase small subunit (201 aa).

It belongs to the LeuD family. LeuD type 1 subfamily. As to quaternary structure, heterodimer of LeuC and LeuD.

The enzyme catalyses (2R,3S)-3-isopropylmalate = (2S)-2-isopropylmalate. It functions in the pathway amino-acid biosynthesis; L-leucine biosynthesis; L-leucine from 3-methyl-2-oxobutanoate: step 2/4. Its function is as follows. Catalyzes the isomerization between 2-isopropylmalate and 3-isopropylmalate, via the formation of 2-isopropylmaleate. This Shewanella sp. (strain ANA-3) protein is 3-isopropylmalate dehydratase small subunit.